Consider the following 307-residue polypeptide: Oxygen-dependent coproporphyrinogen-III oxidase (307 aa).

Ser94 lines the substrate pocket. A divalent metal cation-binding residues include His98 and His108. His108 acts as the Proton donor in catalysis. 110 to 112 lines the substrate pocket; it reads NVR. His147 and His177 together coordinate a divalent metal cation. An important for dimerization region spans residues 242–277; it reads YVEFNLVWDRGTLFGLQSGGRTESILMSMPPLAQWQ. Position 260 to 262 (260 to 262) interacts with substrate; that stretch reads GGR.

It belongs to the aerobic coproporphyrinogen-III oxidase family. Homodimer. The cofactor is a divalent metal cation.

Its subcellular location is the cytoplasm. It carries out the reaction coproporphyrinogen III + O2 + 2 H(+) = protoporphyrinogen IX + 2 CO2 + 2 H2O. The protein operates within porphyrin-containing compound metabolism; protoporphyrin-IX biosynthesis; protoporphyrinogen-IX from coproporphyrinogen-III (O2 route): step 1/1. Functionally, involved in the heme biosynthesis. Catalyzes the aerobic oxidative decarboxylation of propionate groups of rings A and B of coproporphyrinogen-III to yield the vinyl groups in protoporphyrinogen-IX. The protein is Oxygen-dependent coproporphyrinogen-III oxidase of Chromohalobacter salexigens (strain ATCC BAA-138 / DSM 3043 / CIP 106854 / NCIMB 13768 / 1H11).